The chain runs to 361 residues: tRNA 2-selenouridine synthase (361 aa).

A Rhodanese domain is found at 14-137; the sequence is LIADTPIIDV…LRQTAIQATI (124 aa). Catalysis depends on Cys97, which acts as the S-selanylcysteine intermediate.

The protein belongs to the SelU family. In terms of assembly, monomer.

It carries out the reaction 5-methylaminomethyl-2-thiouridine(34) in tRNA + selenophosphate + (2E)-geranyl diphosphate + H2O + H(+) = 5-methylaminomethyl-2-selenouridine(34) in tRNA + (2E)-thiogeraniol + phosphate + diphosphate. It catalyses the reaction 5-methylaminomethyl-2-thiouridine(34) in tRNA + (2E)-geranyl diphosphate = 5-methylaminomethyl-S-(2E)-geranyl-thiouridine(34) in tRNA + diphosphate. The enzyme catalyses 5-methylaminomethyl-S-(2E)-geranyl-thiouridine(34) in tRNA + selenophosphate + H(+) = 5-methylaminomethyl-2-(Se-phospho)selenouridine(34) in tRNA + (2E)-thiogeraniol. The catalysed reaction is 5-methylaminomethyl-2-(Se-phospho)selenouridine(34) in tRNA + H2O = 5-methylaminomethyl-2-selenouridine(34) in tRNA + phosphate. Involved in the post-transcriptional modification of the uridine at the wobble position (U34) of tRNA(Lys), tRNA(Glu) and tRNA(Gln). Catalyzes the conversion of 2-thiouridine (S2U-RNA) to 2-selenouridine (Se2U-RNA). Acts in a two-step process involving geranylation of 2-thiouridine (S2U) to S-geranyl-2-thiouridine (geS2U) and subsequent selenation of the latter derivative to 2-selenouridine (Se2U) in the tRNA chain. The protein is tRNA 2-selenouridine synthase of Escherichia coli O6:H1 (strain CFT073 / ATCC 700928 / UPEC).